The chain runs to 227 residues: Translation initiation factor 6 (227 aa).

It belongs to the eIF-6 family.

Binds to the 50S ribosomal subunit and prevents its association with the 30S ribosomal subunit to form the 70S initiation complex. This Methanococcus vannielii (strain ATCC 35089 / DSM 1224 / JCM 13029 / OCM 148 / SB) protein is Translation initiation factor 6.